The chain runs to 1028 residues: Formate dehydrogenase major subunit (1028 aa).

Positions 1–33 form a signal peptide, tat-type signal; the sequence is MQVSRRKFFKICAGGMAGTSAAMLGFAPANVLA. The 4Fe-4S Mo/W bis-MGD-type domain occupies 43 to 114; it reads AFESRNTCTY…GSLDYVNSES (72 aa). [4Fe-4S] cluster-binding residues include C50, C53, C57, and C100. Residue U204 is a non-standard amino acid, selenocysteine.

This sequence belongs to the prokaryotic molybdopterin-containing oxidoreductase family. Formate dehydrogenase is a membrane-bound complex, formed by subunits alpha, beta and gamma. The cofactor is Mo-bis(molybdopterin guanine dinucleotide). [4Fe-4S] cluster serves as cofactor. In terms of processing, predicted to be exported by the Tat system. The position of the signal peptide cleavage has not been experimentally proven.

Its subcellular location is the periplasm. The catalysed reaction is formate + NAD(+) = CO2 + NADH. Allows to use formate as major electron donor during anaerobic respiration. Subunit alpha possibly forms the active site. In Haemophilus influenzae (strain ATCC 51907 / DSM 11121 / KW20 / Rd), this protein is Formate dehydrogenase major subunit (fdxG).